Reading from the N-terminus, the 366-residue chain is Spermine synthase (366 aa).

At A2 the chain carries N-acetylalanine. Position 57 is a phosphoserine (S57). The 241-residue stretch at 122–362 (RYWPTADGRL…ELWVFYTVWK (241 aa)) folds into the PABS domain. Q148 serves as a coordination point for S-adenosyl 3-(methylsulfanyl)propylamine. Residues Y177 and D201 each coordinate spermidine. Residues E220 and 255-256 (DC) contribute to the S-adenosyl 3-(methylsulfanyl)propylamine site. D276 serves as the catalytic Proton acceptor. Residues Y351 and E353 each contribute to the spermidine site.

The protein belongs to the spermidine/spermine synthase family. Homodimer. Dimerization is mediated through the N-terminal domain and seems to be required for activity as deletion of the N-terminal domain causes complete loss of activity.

The enzyme catalyses S-adenosyl 3-(methylsulfanyl)propylamine + spermidine = spermine + S-methyl-5'-thioadenosine + H(+). It participates in amine and polyamine biosynthesis; spermine biosynthesis; spermine from spermidine: step 1/1. Functionally, catalyzes the production of spermine from spermidine and decarboxylated S-adenosylmethionine (dcSAM). In Homo sapiens (Human), this protein is Spermine synthase.